The chain runs to 94 residues: Co-chaperonin GroES (94 aa).

This sequence belongs to the GroES chaperonin family. As to quaternary structure, heptamer of 7 subunits arranged in a ring. Interacts with the chaperonin GroEL.

It is found in the cytoplasm. Together with the chaperonin GroEL, plays an essential role in assisting protein folding. The GroEL-GroES system forms a nano-cage that allows encapsulation of the non-native substrate proteins and provides a physical environment optimized to promote and accelerate protein folding. GroES binds to the apical surface of the GroEL ring, thereby capping the opening of the GroEL channel. In Streptococcus pneumoniae (strain ATCC 700669 / Spain 23F-1), this protein is Co-chaperonin GroES.